The chain runs to 668 residues: Fructose-1,6-bisphosphatase class 3 (668 aa).

This sequence belongs to the FBPase class 3 family. The cofactor is Mn(2+).

It catalyses the reaction beta-D-fructose 1,6-bisphosphate + H2O = beta-D-fructose 6-phosphate + phosphate. Its pathway is carbohydrate biosynthesis; gluconeogenesis. The sequence is that of Fructose-1,6-bisphosphatase class 3 from Clostridium botulinum (strain Loch Maree / Type A3).